The following is a 91-amino-acid chain: Non-specific lipid-transfer protein 1 (91 aa).

Intrachain disulfides connect cysteine 3-cysteine 50, cysteine 13-cysteine 27, cysteine 28-cysteine 73, and cysteine 48-cysteine 87.

Belongs to the plant LTP family.

Functionally, plant non-specific lipid-transfer proteins transfer phospholipids as well as galactolipids across membranes. May play a role in wax or cutin deposition in the cell walls of expanding epidermal cells and certain secretory tissues. In Prunus domestica (Garden plum), this protein is Non-specific lipid-transfer protein 1.